We begin with the raw amino-acid sequence, 462 residues long: Proteases secretion protein PrtF (462 aa).

The first 23 residues, 1-23 (MRRKAVLLTVVLSLSGGSAQAMG), serve as a signal peptide directing secretion.

The protein belongs to the outer membrane factor (OMF) (TC 1.B.17) family.

The protein resides in the cell outer membrane. In terms of biological role, involved in the secretion of proteases A, B, C and G. This Dickeya chrysanthemi (Pectobacterium chrysanthemi) protein is Proteases secretion protein PrtF (prtF).